The sequence spans 67 residues: Alpha-toxin Tf3 (67 aa).

The 62-residue stretch at 2–63 (KDGYPVEGDN…EPTKTNGRCK (62 aa)) folds into the LCN-type CS-alpha/beta domain. Intrachain disulfides connect C12-C62, C16-C38, C24-C45, and C28-C47. P64 is subject to Proline amide.

Belongs to the long (4 C-C) scorpion toxin superfamily. Sodium channel inhibitor family. Alpha subfamily. Expressed by the venom gland.

The protein resides in the secreted. In terms of biological role, alpha toxins bind voltage-independently at site-3 of sodium channels (Nav) and inhibit the inactivation of the activated channels, thereby blocking neuronal transmission. The protein is Alpha-toxin Tf3 of Tityus fasciolatus (Central Brazilian scorpion).